A 1047-amino-acid polypeptide reads, in one-letter code: Exportin-6 (1047 aa).

Residues 32 to 98 (IDTILNNYKA…KGLLLDIYLN (67 aa)) form the Importin N-terminal domain.

The protein belongs to the exportin family.

Its subcellular location is the nucleus. The protein localises to the cytoplasm. Functionally, probably mediates the nuclear export of actin and profilin-actin complexes. This is Exportin-6 (xpo6) from Dictyostelium discoideum (Social amoeba).